A 213-amino-acid chain; its full sequence is 3-isopropylmalate dehydratase small subunit (213 aa).

It belongs to the LeuD family. LeuD type 1 subfamily. In terms of assembly, heterodimer of LeuC and LeuD.

The enzyme catalyses (2R,3S)-3-isopropylmalate = (2S)-2-isopropylmalate. It participates in amino-acid biosynthesis; L-leucine biosynthesis; L-leucine from 3-methyl-2-oxobutanoate: step 2/4. Its function is as follows. Catalyzes the isomerization between 2-isopropylmalate and 3-isopropylmalate, via the formation of 2-isopropylmaleate. The sequence is that of 3-isopropylmalate dehydratase small subunit from Magnetococcus marinus (strain ATCC BAA-1437 / JCM 17883 / MC-1).